Consider the following 500-residue polypeptide: Glycerol kinase (500 aa).

Threonine 11 contacts ADP. Residues threonine 11, threonine 12, and serine 13 each contribute to the ATP site. Residue threonine 11 participates in sn-glycerol 3-phosphate binding. Arginine 15 provides a ligand contact to ADP. 4 residues coordinate sn-glycerol 3-phosphate: arginine 81, glutamate 82, tyrosine 133, and aspartate 242. Residues arginine 81, glutamate 82, tyrosine 133, aspartate 242, and glutamine 243 each coordinate glycerol. Residues threonine 264 and glycine 307 each coordinate ADP. ATP-binding residues include threonine 264, glycine 307, glutamine 311, and glycine 411. ADP is bound at residue glycine 411.

The protein belongs to the FGGY kinase family.

It catalyses the reaction glycerol + ATP = sn-glycerol 3-phosphate + ADP + H(+). Its pathway is polyol metabolism; glycerol degradation via glycerol kinase pathway; sn-glycerol 3-phosphate from glycerol: step 1/1. Inhibited by fructose 1,6-bisphosphate (FBP). Key enzyme in the regulation of glycerol uptake and metabolism. Catalyzes the phosphorylation of glycerol to yield sn-glycerol 3-phosphate. The chain is Glycerol kinase from Rhodopseudomonas palustris (strain BisA53).